The chain runs to 433 residues: 3-phosphoshikimate 1-carboxyvinyltransferase (433 aa).

3-phosphoshikimate contacts are provided by Lys-15, Ser-16, and Arg-20. Lys-15 contributes to the phosphoenolpyruvate binding site. Gly-96 and Arg-124 together coordinate phosphoenolpyruvate. 3-phosphoshikimate is bound by residues Ser-169, Gln-171, Ser-195, Asp-318, and Lys-345. Position 171 (Gln-171) interacts with phosphoenolpyruvate. The Proton acceptor role is filled by Asp-318. Residues Arg-349 and Arg-393 each contribute to the phosphoenolpyruvate site.

Belongs to the EPSP synthase family. Monomer.

The protein resides in the cytoplasm. The enzyme catalyses 3-phosphoshikimate + phosphoenolpyruvate = 5-O-(1-carboxyvinyl)-3-phosphoshikimate + phosphate. It functions in the pathway metabolic intermediate biosynthesis; chorismate biosynthesis; chorismate from D-erythrose 4-phosphate and phosphoenolpyruvate: step 6/7. Functionally, catalyzes the transfer of the enolpyruvyl moiety of phosphoenolpyruvate (PEP) to the 5-hydroxyl of shikimate-3-phosphate (S3P) to produce enolpyruvyl shikimate-3-phosphate and inorganic phosphate. The chain is 3-phosphoshikimate 1-carboxyvinyltransferase from Pelodictyon phaeoclathratiforme (strain DSM 5477 / BU-1).